Reading from the N-terminus, the 207-residue chain is Chloramphenicol acetyltransferase (207 aa).

The active-site Proton acceptor is His-186.

The protein belongs to the chloramphenicol acetyltransferase family. As to quaternary structure, homotrimer.

It carries out the reaction chloramphenicol + acetyl-CoA = chloramphenicol 3-acetate + CoA. This enzyme is an effector of chloramphenicol resistance in bacteria. The protein is Chloramphenicol acetyltransferase of Campylobacter coli.